Reading from the N-terminus, the 890-residue chain is Wolframin (890 aa).

M1 is modified (N-acetylmethionine). The interval 1–86 is disordered; the sequence is MDSNTAPLGP…TGPTKGDMEI (86 aa). The tract at residues 1–321 is interaction with ATP6V1A; it reads MDSNTAPLGP…MHWLSTIIPT (321 aa). Over residues 10 to 20 the composition is skewed to pro residues; it reads PSCPQPPPAPQ. T30 carries the phosphothreonine; by FAM20C modification. S32 carries the post-translational modification Phosphoserine; by FAM20C. At S157 the chain carries Phosphoserine. Helical transmembrane passes span 314 to 334, 340 to 360, 402 to 422, 427 to 447, 465 to 485, 496 to 516, 529 to 549, 563 to 583, 589 to 609, and 632 to 652; these read WLSTIIPTHHINALIFFFIVS, FFAFFIPLVIFYLSFISMVIC, LEPYAHFLLSVFFVIFSFPIA, IPCSELAVITGFFTVTSYLSL, AGLLSLLPSMPLNWPYLKVLG, LVVLNVSVPCLLYVYLLYLFF, CYLVPYLVCFMWCELSVVILL, YFLFLFALPILVAGLALVGVL, FTSLELTKIAVTVAVCSVPLL, and MVKLILVWLTAIVLFCWFYVY. Residues 653 to 869 lie on the Lumenal side of the membrane; that stretch reads RSEGMKVYNS…HVKIEHDWRS (217 aa). N-linked (GlcNAc...) asparagine glycans are attached at residues N661 and N746. A helical transmembrane segment spans residues 870-890; that stretch reads TVHGAVKFAFDFFFFPFLSAA.

In terms of assembly, interacts with ATP6V1A. As to expression, highly expressed in heart followed by brain, placenta, lung and pancreas. Weakly expressed in liver, kidney and skeletal muscle. Also expressed in islet and beta-cell insulinoma cell line.

The protein resides in the endoplasmic reticulum membrane. It localises to the cytoplasmic vesicle. The protein localises to the secretory vesicle. Its function is as follows. Participates in the regulation of cellular Ca(2+) homeostasis, at least partly, by modulating the filling state of the endoplasmic reticulum Ca(2+) store. Negatively regulates the ER stress response and positively regulates the stability of V-ATPase subunits ATP6V1A and ATP1B1 by preventing their degradation through an unknown proteasome-independent mechanism. This Homo sapiens (Human) protein is Wolframin (WFS1).